A 328-amino-acid chain; its full sequence is P2Y purinoceptor 6 (328 aa).

The Extracellular portion of the chain corresponds to 1–27; sequence MEQDNGTIQAPGLPPTTCVYREDFKRL. A glycan (N-linked (GlcNAc...) asparagine) is linked at Asn5. A helical transmembrane segment spans residues 28–48; sequence LLTPVYSVVLVVGLPLNICVI. The Cytoplasmic portion of the chain corresponds to 49-62; the sequence is AQICASRRTLTRSA. The chain crosses the membrane as a helical span at residues 63 to 83; the sequence is VYTLNLALADLMYACSLPLLI. Residues 84–101 are Extracellular-facing; it reads YNYARGDHWPFGDLACRF. Cys99 and Cys177 form a disulfide bridge. A helical membrane pass occupies residues 102–122; the sequence is VRFLFYANLHGSILFLTCISF. Topologically, residues 123–144 are cytoplasmic; that stretch reads QRYLGICHPLASWHKRGGRRAA. Residues 145 to 165 form a helical membrane-spanning segment; sequence WVVCGVVWLAVTAQCLPTAVF. The Extracellular portion of the chain corresponds to 166–194; the sequence is AATGIQRNRTVCYDLSPPILSTRYLPYGM. Asn173 carries an N-linked (GlcNAc...) asparagine glycan. Residues 195–215 form a helical membrane-spanning segment; the sequence is ALTVIGFLLPFIALLACYCRM. The Cytoplasmic portion of the chain corresponds to 216–236; that stretch reads ARRLCRQDGPAGPVAQERRSK. The helical transmembrane segment at 237-257 threads the bilayer; sequence AARMAVVVAAVFAISFLPFHI. Over 258–280 the chain is Extracellular; sequence TKTAYLAVRSTPGVSCPVLETFA. Residues 281-303 traverse the membrane as a helical segment; it reads AAYKGTRPFASVNSVLDPILFYF. At 304-328 the chain is on the cytoplasmic side; sequence TQQKFRRQPHDLLQRLTAKWQRQRV.

This sequence belongs to the G-protein coupled receptor 1 family.

It is found in the cell membrane. Receptor for extracellular UTP &gt; ADP = 2-methylthio-ATP &gt; ADP-beta-S &gt; ATP = ATP-gamma-S. The activity of this receptor is mediated by G proteins which activate a phosphatidylinositol-calcium second messenger system. Functionally coupled to phospholipase C. In Mus musculus (Mouse), this protein is P2Y purinoceptor 6 (P2ry6).